A 416-amino-acid chain; its full sequence is S-adenosylmethionine synthase (416 aa).

Position 14 (His14) interacts with ATP. Residue Asp16 participates in Mg(2+) binding. Glu42 contacts K(+). Residues Glu55 and Gln98 each coordinate L-methionine. Positions 98 to 108 (QSADINQGVDR) are flexible loop. Residues 164–166 (DAK), 240–241 (KF), Asp249, 255–256 (RK), Ala272, and Lys276 each bind ATP. L-methionine is bound at residue Asp249. Lys280 is a binding site for L-methionine.

It belongs to the AdoMet synthase family. As to quaternary structure, homotetramer; dimer of dimers. Mg(2+) is required as a cofactor. K(+) serves as cofactor.

Its subcellular location is the cytoplasm. It carries out the reaction L-methionine + ATP + H2O = S-adenosyl-L-methionine + phosphate + diphosphate. Its pathway is amino-acid biosynthesis; S-adenosyl-L-methionine biosynthesis; S-adenosyl-L-methionine from L-methionine: step 1/1. Catalyzes the formation of S-adenosylmethionine (AdoMet) from methionine and ATP. The overall synthetic reaction is composed of two sequential steps, AdoMet formation and the subsequent tripolyphosphate hydrolysis which occurs prior to release of AdoMet from the enzyme. The chain is S-adenosylmethionine synthase from Flavobacterium johnsoniae (strain ATCC 17061 / DSM 2064 / JCM 8514 / BCRC 14874 / CCUG 350202 / NBRC 14942 / NCIMB 11054 / UW101) (Cytophaga johnsonae).